Here is a 377-residue protein sequence, read N- to C-terminus: Succinyl-diaminopimelate desuccinylase (377 aa).

H68 serves as a coordination point for Zn(2+). The active site involves D70. Residue D101 participates in Zn(2+) binding. The active-site Proton acceptor is the E135. Residues E136, E164, and H350 each contribute to the Zn(2+) site.

Belongs to the peptidase M20A family. DapE subfamily. In terms of assembly, homodimer. Requires Zn(2+) as cofactor. It depends on Co(2+) as a cofactor.

The enzyme catalyses N-succinyl-(2S,6S)-2,6-diaminopimelate + H2O = (2S,6S)-2,6-diaminopimelate + succinate. The protein operates within amino-acid biosynthesis; L-lysine biosynthesis via DAP pathway; LL-2,6-diaminopimelate from (S)-tetrahydrodipicolinate (succinylase route): step 3/3. Catalyzes the hydrolysis of N-succinyl-L,L-diaminopimelic acid (SDAP), forming succinate and LL-2,6-diaminopimelate (DAP), an intermediate involved in the bacterial biosynthesis of lysine and meso-diaminopimelic acid, an essential component of bacterial cell walls. In Acinetobacter baumannii (strain AB0057), this protein is Succinyl-diaminopimelate desuccinylase.